Here is a 457-residue protein sequence, read N- to C-terminus: Ribosomal protein uS12 methylthiotransferase RimO (457 aa).

Positions 30–140 (PTIGMVSLGC…VLDAVHGAVP (111 aa)) constitute an MTTase N-terminal domain. Positions 39, 75, 104, 171, 175, and 178 each coordinate [4Fe-4S] cluster. The 230-residue stretch at 157 to 386 (LTPRHFSYLK…MQKAQAISEA (230 aa)) folds into the Radical SAM core domain. Residues 389–456 (AARIGQRLEV…EYDLWGRAVL (68 aa)) enclose the TRAM domain.

The protein belongs to the methylthiotransferase family. RimO subfamily. [4Fe-4S] cluster is required as a cofactor.

The protein resides in the cytoplasm. It carries out the reaction L-aspartate(89)-[ribosomal protein uS12]-hydrogen + (sulfur carrier)-SH + AH2 + 2 S-adenosyl-L-methionine = 3-methylsulfanyl-L-aspartate(89)-[ribosomal protein uS12]-hydrogen + (sulfur carrier)-H + 5'-deoxyadenosine + L-methionine + A + S-adenosyl-L-homocysteine + 2 H(+). In terms of biological role, catalyzes the methylthiolation of an aspartic acid residue of ribosomal protein uS12. The protein is Ribosomal protein uS12 methylthiotransferase RimO of Cereibacter sphaeroides (strain ATCC 17025 / ATH 2.4.3) (Rhodobacter sphaeroides).